We begin with the raw amino-acid sequence, 424 residues long: Histidine--tRNA ligase (424 aa).

This sequence belongs to the class-II aminoacyl-tRNA synthetase family. In terms of assembly, homodimer.

It localises to the cytoplasm. The enzyme catalyses tRNA(His) + L-histidine + ATP = L-histidyl-tRNA(His) + AMP + diphosphate + H(+). This Francisella philomiragia subsp. philomiragia (strain ATCC 25017 / CCUG 19701 / FSC 153 / O#319-036) protein is Histidine--tRNA ligase.